The chain runs to 361 residues: Peptide chain release factor 1 (361 aa).

Gln-235 carries the post-translational modification N5-methylglutamine. Residues 288–307 (AAEAQTRKLQVGSGDRSQRI) form a disordered region.

The protein belongs to the prokaryotic/mitochondrial release factor family. Methylated by PrmC. Methylation increases the termination efficiency of RF1.

The protein resides in the cytoplasm. Its function is as follows. Peptide chain release factor 1 directs the termination of translation in response to the peptide chain termination codons UAG and UAA. The chain is Peptide chain release factor 1 from Xanthomonas axonopodis pv. citri (strain 306).